The chain runs to 134 residues: Small ribosomal subunit protein uS11 (134 aa).

Belongs to the universal ribosomal protein uS11 family. In terms of assembly, part of the 30S ribosomal subunit. Interacts with proteins S7 and S18. Binds to IF-3.

Located on the platform of the 30S subunit, it bridges several disparate RNA helices of the 16S rRNA. Forms part of the Shine-Dalgarno cleft in the 70S ribosome. The protein is Small ribosomal subunit protein uS11 of Frankia casuarinae (strain DSM 45818 / CECT 9043 / HFP020203 / CcI3).